A 348-amino-acid polypeptide reads, in one-letter code: Rhodopsin (348 aa).

The residue at position 1 (methionine 1) is an N-acetylmethionine. At 1–36 (MNGTEGPNFYVPFSNITGVVRSPFEQPQYYLAEPWQ) the chain is on the extracellular side. N-linked (GlcNAc...) asparagine glycans are attached at residues asparagine 2 and asparagine 15. A helical membrane pass occupies residues 37-61 (FSMLAAYMFLLIVLGFPINFLTLYV). Residues 62-73 (TVQHKKLRTPLN) are Cytoplasmic-facing. Residues 74-96 (YILLNLAVADLFMVFGGFTTTLY) traverse the membrane as a helical segment. Over 97 to 110 (TSLHGYFVFGPTGC) the chain is Extracellular. Cysteine 110 and cysteine 187 form a disulfide bridge. A helical membrane pass occupies residues 111–133 (NLEGFFATLGGEIGLWSLVVLAI). The 'Ionic lock' involved in activated form stabilization motif lies at 134 to 136 (ERY). Over 134 to 152 (ERYVVVCKPMSNFRFGENH) the chain is Cytoplasmic. A helical membrane pass occupies residues 153–173 (AIMGVAFTWVMALACAAPPLV). Residues 174–202 (GWSRYIPEGMQCSCGIDYYTLKPEVNNES) are Extracellular-facing. Residue glutamate 201 participates in Zn(2+) binding. Residues 203-224 (FVIYMFVVHFTIPMIVIFFCYG) traverse the membrane as a helical segment. Residues 225 to 252 (QLVFTVKEAAAQQQESATTQKAEKEVTR) are Cytoplasmic-facing. Residues 253-274 (MVIIMVIFFLICWLPYASVAMY) form a helical membrane-spanning segment. At 275–286 (IFTHQGSNFGPI) the chain is on the extracellular side. Glutamine 279 contacts Zn(2+). A helical transmembrane segment spans residues 287 to 308 (FMTLPAFFAKTASIYNPIIYIM). Lysine 296 is subject to N6-(retinylidene)lysine. Residues 309 to 348 (MNKQFRNCMLTSLCCGKNPLGDDEASATASKTETSQVAPA) lie on the Cytoplasmic side of the membrane. 2 S-palmitoyl cysteine lipidation sites follow: cysteine 322 and cysteine 323. The segment at 330–348 (DDEASATASKTETSQVAPA) is interaction with SAG. Serine 334 bears the Phosphoserine mark. Threonine 336 is modified (phosphothreonine). The residue at position 338 (serine 338) is a Phosphoserine. A phosphothreonine mark is found at threonine 340 and threonine 342. Position 343 is a phosphoserine (serine 343).

The protein belongs to the G-protein coupled receptor 1 family. Opsin subfamily. In terms of assembly, homodimer. May form a complex composed of RHO, GRK1 and RCVRN in a Ca(2+)-dependent manner; RCVRN prevents the interaction between GRK1 and RHO. Interacts with GRK1. Interacts (phosphorylated form) with SAG. Interacts with GNAT1. Interacts with GNAT3. SAG and G-proteins compete for a common binding site. Interacts with PRCD; the interaction promotes PRCD stability. Forms a complex with ASAP1 and ARF4. Forms a complex with ASAP1, RAB11A, Rabin8/RAB3IP, ARF4 and RAB11FIP3; the complex regulates Golgi-to-cilia rhodopsin/RHO transport in photoreceptors. Phosphorylated on some or all of the serine and threonine residues present in the C-terminal region. Post-translationally, contains one covalently linked retinal chromophore. Upon light absorption, the covalently bound 11-cis-retinal is converted to all-trans-retinal. After hydrolysis of the Schiff base and release of the covalently bound all-trans-retinal, active rhodopsin is regenerated by binding of a fresh molecule of 11-cis-retinal.

The protein localises to the membrane. Its subcellular location is the cell projection. The protein resides in the cilium. It is found in the photoreceptor outer segment. Photoreceptor required for image-forming vision at low light intensity. Required for photoreceptor cell viability after birth. Light-induced isomerization of 11-cis to all-trans retinal triggers a conformational change that activates signaling via G-proteins. Subsequent receptor phosphorylation mediates displacement of the bound G-protein alpha subunit by the arrestin SAG and terminates signaling. This Rattus norvegicus (Rat) protein is Rhodopsin (Rho).